Reading from the N-terminus, the 238-residue chain is Large ribosomal subunit protein uL1 (238 aa).

The protein belongs to the universal ribosomal protein uL1 family. Part of the 50S ribosomal subunit.

Functionally, binds directly to 23S rRNA. The L1 stalk is quite mobile in the ribosome, and is involved in E site tRNA release. Protein L1 is also a translational repressor protein, it controls the translation of the L11 operon by binding to its mRNA. The protein is Large ribosomal subunit protein uL1 of Saccharopolyspora erythraea (strain ATCC 11635 / DSM 40517 / JCM 4748 / NBRC 13426 / NCIMB 8594 / NRRL 2338).